A 67-amino-acid polypeptide reads, in one-letter code: Cell division protein ZapB (67 aa).

Residues 3-59 (LELLSKLETKIQTALETIELLKMELEEEKQKSIGLAEQNQQLSQDLNSWNEKVTGLV) are a coiled coil.

Belongs to the ZapB family. In terms of assembly, homodimer. The ends of the coiled-coil dimer bind to each other, forming polymers. Interacts with FtsZ.

The protein localises to the cytoplasm. Non-essential, abundant cell division factor that is required for proper Z-ring formation. It is recruited early to the divisome by direct interaction with FtsZ, stimulating Z-ring assembly and thereby promoting cell division earlier in the cell cycle. Its recruitment to the Z-ring requires functional FtsA or ZipA. The sequence is that of Cell division protein ZapB from Shewanella woodyi (strain ATCC 51908 / MS32).